A 1018-amino-acid polypeptide reads, in one-letter code: Ubiquitin carboxyl-terminal hydrolase 35 (1018 aa).

The USP domain occupies 441–926 (IGLINLGNTC…TAYVLFYRQR (486 aa)). C450 acts as the Nucleophile in catalysis. Disordered regions lie at residues 544-566 (QKLKQSSSPSPPEEPPAPSSTSV) and 610-757 (RLGS…GSEG). Positions 552–561 (PSPPEEPPAP) are enriched in pro residues. S613 is subject to Phosphoserine. Composition is skewed to basic and acidic residues over residues 673–691 (QEERIEREEEGKEERTEKE), 699–709 (STRGEGEREKE), and 718–728 (KVEKETEKEAE). The active-site Proton acceptor is H862. Residues 984-1011 (HWGRGFDEDKDEDEGSPGGCNPAGGNGG) are disordered. Residues 999-1011 (SPGGCNPAGGNGG) are compositionally biased toward gly residues.

It belongs to the peptidase C19 family. Homodimer (via C-terminal region). Interacts with HSP90AA1. In terms of processing, ubiquitinated by CHIP/STUB1 in an HSP90-dependent manner; leading to proteasomal degradation. This ubiquitination can be reversed through auto-deubiquitinating activity. As to expression, expressed in testis, pancreas and skeletal muscle.

The protein localises to the cytoplasm. It localises to the mitochondrion. The enzyme catalyses Thiol-dependent hydrolysis of ester, thioester, amide, peptide and isopeptide bonds formed by the C-terminal Gly of ubiquitin (a 76-residue protein attached to proteins as an intracellular targeting signal).. Functionally, deubiquitinase that plays a role in different processes including cell cycle regulation, mitophagy or endoplasmic reticulum stress. Inhibits TNFalpha-induced NF-kappa-B activation through stabilizing TNIP2 protein via deubiquitination. Plays an essential role during mitosis by deubiquitinating and thereby regulating the levels of Aurora B/AURKB protein. In addition, regulates the protein levels of other key component of the chromosomal passenger complex (CPC) such as survivin/BIRC5 or Borealin/CDCA8 by enhancing their stability. Regulates the degradation of mitochondria through the process of autophagy termed mitophagy. This Homo sapiens (Human) protein is Ubiquitin carboxyl-terminal hydrolase 35 (USP35).